Reading from the N-terminus, the 1330-residue chain is Kinectin (1330 aa).

Over 1–6 (MEFYES) the chain is Cytoplasmic. Residues 7 to 29 (TYFIVLIPSVVITVIFLFFWLFM) traverse the membrane as a helical; Signal-anchor for type II membrane protein segment. Over 30-1330 (KETLYDEVLA…KEKEHYQVLE (1301 aa)) the chain is Lumenal. 2 disordered regions span residues 49-81 (PTKT…ESVP) and 108-218 (SSSV…KQKA). Phosphoserine occurs at positions 75 and 77. Residues 113–122 (ERKKKEKKHK) show a composition bias toward basic residues. Over residues 123-135 (PVLEEQVTKESDV) the composition is skewed to basic and acidic residues. The residue at position 153 (Thr153) is a Phosphothreonine. A Phosphoserine modification is found at Ser156. Residues 161–171 (SKKKPGQKKSK) are compositionally biased toward basic residues. 5 N-linked (GlcNAc...) asparagine glycosylation sites follow: Asn172, Asn435, Asn772, Asn904, and Asn1055. A compositionally biased stretch (basic and acidic residues) spans 172-182 (NGSDDQDKKVE). Residues 332–1329 (HQLQEKDKLL…TKEKEHYQVL (998 aa)) adopt a coiled-coil conformation. At Ser1085 the chain carries Phosphoserine. Asn1236 carries N-linked (GlcNAc...) asparagine glycosylation. Ser1286 is modified (phosphoserine). N-linked (GlcNAc...) asparagine glycosylation is present at Asn1302.

Belongs to the kinectin family. In terms of assembly, parallel homodimers formed between the membrane-bound and the cytosolic form, and also between 2 cytosolic forms. Expressed in male brain, heart, kidney, liver, lung, spleen and testis.

It is found in the endoplasmic reticulum membrane. Functionally, receptor for kinesin thus involved in kinesin-driven vesicle motility. This chain is Kinectin (KTN1), found in Vulpes vulpes (Red fox).